We begin with the raw amino-acid sequence, 1179 residues long: ATP-dependent helicase/deoxyribonuclease subunit B (1179 aa).

The protein belongs to the helicase family. AddB/RexB type 2 subfamily. As to quaternary structure, heterodimer of AddA and RexB. It depends on Mg(2+) as a cofactor.

Its function is as follows. The heterodimer acts as both an ATP-dependent DNA helicase and an ATP-dependent, dual-direction single-stranded exonuclease. Recognizes the chi site generating a DNA molecule suitable for the initiation of homologous recombination. This subunit has 5' -&gt; 3' nuclease activity but not helicase activity. This is ATP-dependent helicase/deoxyribonuclease subunit B from Lacticaseibacillus paracasei (strain ATCC 334 / BCRC 17002 / CCUG 31169 / CIP 107868 / KCTC 3260 / NRRL B-441) (Lactobacillus paracasei).